The primary structure comprises 22 residues: 2.4 kDa venom peptide (22 aa).

Post-translationally, contains 2 disulfide bonds. In terms of tissue distribution, expressed by the venom gland.

The protein localises to the secreted. Functionally, not lethal to mice by intraperitoneal or intracerebroventricular injections in doses up to 150 micrograms. The sequence is that of 2.4 kDa venom peptide from Heterometrus spinifer (Asia giant forest scorpion).